A 422-amino-acid polypeptide reads, in one-letter code: Nuclear hormone receptor family member nhr-54 (422 aa).

Positions 14 to 92 form a DNA-binding region, nuclear receptor; the sequence is SVKCAICYKA…LGMTTENVRT (79 aa). 2 consecutive NR C4-type zinc fingers follow at residues 17-37 and 53-80; these read CAICYKAGHGQHFGVETCRAC and CTRKSGKCKIGSDETKDVMCKFCRFKKC. An NR LBD domain is found at 161–422; that stretch reads PDDDVIVELN…VFTEPEFFRV (262 aa).

Belongs to the nuclear hormone receptor family.

It localises to the nucleus. Its function is as follows. Orphan nuclear receptor. This chain is Nuclear hormone receptor family member nhr-54 (nhr-54), found in Caenorhabditis elegans.